Consider the following 112-residue polypeptide: UPF0329 protein ECU11_0080 (112 aa).

It belongs to the UPF0329 family.

The polypeptide is UPF0329 protein ECU11_0080 (Encephalitozoon cuniculi (strain GB-M1) (Microsporidian parasite)).